An 82-amino-acid chain; its full sequence is MDFTMSLVAGLIAIGAGIAVGFGAIGSGIGQGIAAGKAFEAMARQPEVRGTVQTFLIIALAFMETLTIYGLVIAFMLLNKMS.

2 helical membrane passes run 5–25 (MSLV…FGAI) and 55–75 (FLII…VIAF).

This sequence belongs to the ATPase C chain family. F-type ATPases have 2 components, F(1) - the catalytic core - and F(0) - the membrane proton channel. F(1) has five subunits: alpha(3), beta(3), gamma(1), delta(1), epsilon(1). F(0) has three main subunits: a(1), b(2) and c(10-14). The alpha and beta chains form an alternating ring which encloses part of the gamma chain. F(1) is attached to F(0) by a central stalk formed by the gamma and epsilon chains, while a peripheral stalk is formed by the delta and b chains.

The protein resides in the cell membrane. In terms of biological role, f(1)F(0) ATP synthase produces ATP from ADP in the presence of a proton or sodium gradient. F-type ATPases consist of two structural domains, F(1) containing the extramembraneous catalytic core and F(0) containing the membrane proton channel, linked together by a central stalk and a peripheral stalk. During catalysis, ATP synthesis in the catalytic domain of F(1) is coupled via a rotary mechanism of the central stalk subunits to proton translocation. Functionally, key component of the F(0) channel; it plays a direct role in translocation across the membrane. A homomeric c-ring of between 10-14 subunits forms the central stalk rotor element with the F(1) delta and epsilon subunits. The protein is ATP synthase subunit c of Carboxydothermus hydrogenoformans (strain ATCC BAA-161 / DSM 6008 / Z-2901).